Consider the following 279-residue polypeptide: Ribosomal RNA small subunit methyltransferase A (279 aa).

Positions 28, 30, 55, 77, 103, and 122 each coordinate S-adenosyl-L-methionine.

Belongs to the class I-like SAM-binding methyltransferase superfamily. rRNA adenine N(6)-methyltransferase family. RsmA subfamily.

It localises to the cytoplasm. The enzyme catalyses adenosine(1518)/adenosine(1519) in 16S rRNA + 4 S-adenosyl-L-methionine = N(6)-dimethyladenosine(1518)/N(6)-dimethyladenosine(1519) in 16S rRNA + 4 S-adenosyl-L-homocysteine + 4 H(+). Specifically dimethylates two adjacent adenosines (A1518 and A1519) in the loop of a conserved hairpin near the 3'-end of 16S rRNA in the 30S particle. May play a critical role in biogenesis of 30S subunits. In Ruegeria pomeroyi (strain ATCC 700808 / DSM 15171 / DSS-3) (Silicibacter pomeroyi), this protein is Ribosomal RNA small subunit methyltransferase A.